The following is a 189-amino-acid chain: Chitin synthase 1 (189 aa).

This sequence belongs to the chitin synthase family. Class I subfamily.

The protein localises to the cell membrane. It carries out the reaction [(1-&gt;4)-N-acetyl-beta-D-glucosaminyl](n) + UDP-N-acetyl-alpha-D-glucosamine = [(1-&gt;4)-N-acetyl-beta-D-glucosaminyl](n+1) + UDP + H(+). Polymerizes chitin, a structural polymer of the cell wall and septum, by transferring the sugar moiety of UDP-GlcNAc to the non-reducing end of the growing chitin polymer. This Exophiala jeanselmei (Dematiaceous fungus) protein is Chitin synthase 1 (CHS1).